The chain runs to 696 residues: Protein OS-9 homolog (696 aa).

An N-terminal signal peptide occupies residues 1-15; the sequence is MLVVAFASLLGAARA. N-linked (GlcNAc...) asparagine glycosylation is found at Asn35, Asn46, and Asn68. The 119-residue stretch at 106-224 folds into the MRH domain; it reads NQCLVSQNGF…QVIVPDLCQL (119 aa). Cys108 and Cys121 are oxidised to a cystine. The a mannooligosaccharide derivative site is built by Trp116, Gln128, Asp178, Arg184, Glu206, and Tyr212. Intrachain disulfides connect Cys177-Cys210 and Cys192-Cys222. Asn276, Asn290, and Asn372 each carry an N-linked (GlcNAc...) asparagine glycan. Disordered regions lie at residues 450–600 and 667–696; these read IEAS…DNSD and TLGNNDGVASDVKDEEVVESDRNGVIDDEL. Polar residues predominate over residues 458–467; the sequence is TKASESTPVS. The segment covering 482–498 has biased composition (basic and acidic residues); the sequence is RSRDKEEYFKENEKQGE. 3 stretches are compositionally biased toward polar residues: residues 499–518, 528–553, and 585–597; these read ENNAQVPFSAHNNEQHGTIS, NQKQLANTQKGDTDTPPQSSQSSAND, and NIDNSSGRSTLND. The N-linked (GlcNAc...) asparagine glycan is linked to Asn588. Residues 685 to 696 are compositionally biased toward basic and acidic residues; the sequence is ESDRNGVIDDEL.

This sequence belongs to the OS-9 family. Interacts with missfolded ER lumenal proteins.

The protein resides in the endoplasmic reticulum membrane. Functionally, lectin involved in the quality control of the secretory pathway. As a member of the endoplasmic reticulum-associated degradation lumenal (ERAD-L) surveillance system, targets misfolded endoplasmic reticulum lumenal glycoproteins for degradation. This is Protein OS-9 homolog (YOS9) from Candida glabrata (strain ATCC 2001 / BCRC 20586 / JCM 3761 / NBRC 0622 / NRRL Y-65 / CBS 138) (Yeast).